Reading from the N-terminus, the 453-residue chain is DNA repair protein RadA (453 aa).

The C4-type zinc-finger motif lies at 10–27 (CQECGYQSPKYLGRCPNC). 95–102 (GDPGIGKS) contributes to the ATP binding site. Residues 251–255 (KNRFG) carry the RadA KNRFG motif motif. The tract at residues 350–453 (DAYLKSAGGV…VGQVLKAVFS (104 aa)) is lon-protease-like.

The protein belongs to the RecA family. RadA subfamily.

Functionally, DNA-dependent ATPase involved in processing of recombination intermediates, plays a role in repairing DNA breaks. Stimulates the branch migration of RecA-mediated strand transfer reactions, allowing the 3' invading strand to extend heteroduplex DNA faster. Binds ssDNA in the presence of ADP but not other nucleotides, has ATPase activity that is stimulated by ssDNA and various branched DNA structures, but inhibited by SSB. Does not have RecA's homology-searching function. The protein is DNA repair protein RadA of Streptococcus pyogenes serotype M3 (strain ATCC BAA-595 / MGAS315).